We begin with the raw amino-acid sequence, 195 residues long: tRNA (pseudouridine(54)-N(1))-methyltransferase (195 aa).

Residue leucine 129 coordinates S-adenosyl-L-methionine.

This sequence belongs to the methyltransferase superfamily. TrmY family. As to quaternary structure, homodimer.

It is found in the cytoplasm. It carries out the reaction pseudouridine(54) in tRNA + S-adenosyl-L-methionine = N(1)-methylpseudouridine(54) in tRNA + S-adenosyl-L-homocysteine + H(+). Functionally, specifically catalyzes the N1-methylation of pseudouridine at position 54 (Psi54) in tRNAs. In Methanocorpusculum labreanum (strain ATCC 43576 / DSM 4855 / Z), this protein is tRNA (pseudouridine(54)-N(1))-methyltransferase.